The sequence spans 483 residues: MKQTSIREQYTRPAMRRIETIHFVGIGGAGMGGIAEVLAFEGYRITGSDIAHSAMTDRLIKAGAEVFIGHHENNVKDANVVVVSSAIDETNPEIIAAKAARVPVVRRAEMLAELMRFRHGIAIAGTHGKTTTTSLIASIYAQAGLDPTFIIGGLLNSAGSNAKVGKSDFLIAEADESDASFLHLQPMVSVITNIEEDHMETYGGSLEKMKDTYVDFIHNLPFYGLAVVCIDSEVASELIPRFGRPVITYGESSDADYRMSDFSQSANTCKFTVTNKQGESLTATLNMPGKHNALNATAAIAVAKDQNIANFAILEALQKFEGIGRRFQHYGEFENERGSVMLVDDYGHHPSEVAATITAAREGWPDKRLVMVYQPHRFTRTRDLYEDFVKVLAEVDQLLLLDVYSAGEEPIVGADSKSLCRSLRQRGKEPRHVANSAELASVLADCLQNNDLVLTQGAGNIGQLVKTLAATGMSIEKLKQGEV.

125-131 (GTHGKTT) contributes to the ATP binding site.

This sequence belongs to the MurCDEF family.

The protein localises to the cytoplasm. The enzyme catalyses UDP-N-acetyl-alpha-D-muramate + L-alanine + ATP = UDP-N-acetyl-alpha-D-muramoyl-L-alanine + ADP + phosphate + H(+). The protein operates within cell wall biogenesis; peptidoglycan biosynthesis. Cell wall formation. The sequence is that of UDP-N-acetylmuramate--L-alanine ligase from Pseudoalteromonas translucida (strain TAC 125).